The following is a 66-amino-acid chain: uncharacterized protein (66 aa).

A hydrophobic region spans residues 1 to 20 (MIALAYLATVAIAAMVLAVA).

This is an uncharacterized protein from Streptomyces lividans.